The primary structure comprises 422 residues: La-related protein 6A (422 aa).

A disordered region spans residues 1–94; the sequence is MSSLPLRSGE…DHGENPVETD (94 aa). The span at 48–61 shows a compositional bias: low complexity; sequence VTESSDDVVVNVSE. The span at 73–89 shows a compositional bias: basic and acidic residues; it reads DHERNSGEDRDQDHGEN. Residues 97-188 enclose the HTH La-type RNA-binding domain; sequence VVPIDELNQK…KRLSPLPEIR (92 aa). The RRM domain occupies 193–283; the sequence is FTVLVENLPE…NGLRVKLLEQ (91 aa). Residues 286–422 are disordered; sequence GKFAQRRPAR…PTSTQTSHEV (137 aa). A compositionally biased stretch (basic and acidic residues) spans 295–348; that stretch reads RREVDKEKDTTGRVHDQTGGEKNKKTREHQNHRLHHSDNPADDDGGNHQKDKNG.

Its subcellular location is the nucleus. In terms of biological role, transcriptional regulator. The chain is La-related protein 6A (LARP6A) from Arabidopsis thaliana (Mouse-ear cress).